Reading from the N-terminus, the 145-residue chain is Deoxyuridine 5'-triphosphate nucleotidohydrolase (145 aa).

Residues 65 to 67 (RSG), Asn-78, 82 to 84 (TID), and Met-92 contribute to the substrate site.

The protein belongs to the dUTPase family. It depends on Mg(2+) as a cofactor.

It carries out the reaction dUTP + H2O = dUMP + diphosphate + H(+). It functions in the pathway pyrimidine metabolism; dUMP biosynthesis; dUMP from dCTP (dUTP route): step 2/2. This enzyme is involved in nucleotide metabolism: it produces dUMP, the immediate precursor of thymidine nucleotides and it decreases the intracellular concentration of dUTP so that uracil cannot be incorporated into DNA. This Chlorobium phaeobacteroides (strain BS1) protein is Deoxyuridine 5'-triphosphate nucleotidohydrolase.